The following is a 236-amino-acid chain: Proteasome subunit alpha (236 aa).

It belongs to the peptidase T1A family. In terms of assembly, the 20S proteasome core is composed of 14 alpha and 14 beta subunits that assemble into four stacked heptameric rings, resulting in a barrel-shaped structure. The two inner rings, each composed of seven catalytic beta subunits, are sandwiched by two outer rings, each composed of seven alpha subunits. The catalytic chamber with the active sites is on the inside of the barrel. Has a gated structure, the ends of the cylinder being occluded by the N-termini of the alpha-subunits. Is capped by the proteasome-associated ATPase, ARC.

It is found in the cytoplasm. It participates in protein degradation; proteasomal Pup-dependent pathway. The formation of the proteasomal ATPase ARC-20S proteasome complex, likely via the docking of the C-termini of ARC into the intersubunit pockets in the alpha-rings, may trigger opening of the gate for substrate entry. Interconversion between the open-gate and close-gate conformations leads to a dynamic regulation of the 20S proteasome proteolysis activity. Functionally, component of the proteasome core, a large protease complex with broad specificity involved in protein degradation. The polypeptide is Proteasome subunit alpha (Jonesia denitrificans (strain ATCC 14870 / DSM 20603 / BCRC 15368 / CIP 55.134 / JCM 11481 / NBRC 15587 / NCTC 10816 / Prevot 55134) (Listeria denitrificans)).